The sequence spans 209 residues: MHRQLRYAVLATALFASTAFAGARQELDTFTRGLKGLDGQFSQRVTDANGRVKETSSGRVALATPRQFRWEYAKPYKQLIVADGKKVWVFDPDLEQVTVRAQGSEEQNSPLVALIDPALLDKKYDVSEEAAPRDGLQWLSLTPKVDTDASFQIASLGFGREGLARMEVVDAVGQRTAIGFSGWKRNPAFAADTFRYTPAKGVDVVGDAQ.

Residues methionine 1–alanine 21 form the signal peptide.

The protein belongs to the LolA family. As to quaternary structure, monomer.

It localises to the periplasm. Functionally, participates in the translocation of lipoproteins from the inner membrane to the outer membrane. Only forms a complex with a lipoprotein if the residue after the N-terminal Cys is not an aspartate (The Asp acts as a targeting signal to indicate that the lipoprotein should stay in the inner membrane). The sequence is that of Outer-membrane lipoprotein carrier protein from Xanthomonas axonopodis pv. citri (strain 306).